Consider the following 535-residue polypeptide: Heat shock factor protein 2 (535 aa).

Glycyl lysine isopeptide (Lys-Gly) (interchain with G-Cter in SUMO2) cross-links involve residues K2, K82, K135, K139, K151, K210, K218, and K237. The DNA-binding element occupies 7–112 (VPAFLSKLWT…LLENIKRKVS (106 aa)). The segment at 119-192 (NKIRQEDLTK…VTLVQNNQLV (74 aa)) is hydrophobic repeat HR-A/B. The segment at 298 to 325 (QSGEQSEPAREPLRVGSAGSSSPLMSSA) is disordered. Positions 313 to 325 (GSAGSSSPLMSSA) are enriched in low complexity. The hydrophobic repeat HR-C stretch occupies residues 359 to 384 (LLDYLDSIDCSLEDFQAMLSGRQFSI). The interval 418–437 (TKSSVVQHVSEEGRKSKSKP) is disordered. The segment covering 426–437 (VSEEGRKSKSKP) has biased composition (basic and acidic residues).

This sequence belongs to the HSF family. As to quaternary structure, DNA-binding homotrimer in stressed or heat shocked cells, otherwise found as a homodimer. In terms of tissue distribution, isoform alpha is expressed predominantly in testis while isoform beta is expressed predominantly in heart and brain.

It is found in the cytoplasm. Its subcellular location is the nucleus. DNA-binding protein that specifically binds heat shock promoter elements (HSE) and activates transcription. In higher eukaryotes, HSF is unable to bind to the HSE unless the cells are heat shocked. HSF2 is expressed in a form that binds DNA constitutively but loses DNA binding by incubation at greater than 41 degrees C. The protein is Heat shock factor protein 2 (Hsf2) of Mus musculus (Mouse).